A 195-amino-acid chain; its full sequence is Interferon tau (195 aa).

Positions 1 to 23 (MAFVLSLRMALVLVSYCPGGSLG) are cleaved as a signal peptide. Disulfide bonds link cysteine 24-cysteine 122 and cysteine 52-cysteine 162. Residue asparagine 101 is glycosylated (N-linked (GlcNAc...) asparagine).

This sequence belongs to the alpha/beta interferon family. IFN-alphaII subfamily. Constitutively and exclusively expressed in the mononuclear cells of the extraembryonic trophectoderm.

The protein resides in the secreted. Paracrine hormone primarily responsible for maternal recognition of pregnancy. Interacts with endometrial receptors, probably type I interferon receptors, and blocks estrogen receptor expression, preventing the estrogen-induced increase in oxytocin receptor expression in the endometrium. This results in the suppression of the pulsatile endometrial release of the luteolytic hormone prostaglandin F2-alpha, hindering the regression of the corpus luteum (luteolysis) and therefore a return to ovarian cyclicity. This, and a possible direct effect of IFN-tau on prostaglandin synthesis, leads in turn to continued ovarian progesterone secretion, which stimulates the secretion by the endometrium of the nutrients required for the growth of the conceptus. In summary, displays particularly high antiviral and antiproliferative potency concurrently with particular weak cytotoxicity, high antiluteolytic activity and immunomodulatory properties. In contrast with other IFNs, IFN-tau is not virally inducible. The protein is Interferon tau (IFNT) of Ovibos moschatus (Muskox).